A 71-amino-acid polypeptide reads, in one-letter code: uncharacterized protein (71 aa).

The first 21 residues, 1–21 (MGVGLHGDHVGGELNSANAFT), serve as a signal peptide directing secretion.

This is an uncharacterized protein from Haemophilus influenzae (strain ATCC 51907 / DSM 11121 / KW20 / Rd).